The primary structure comprises 881 residues: Putative leucine-rich repeat receptor-like protein kinase At2g19210 (881 aa).

The N-terminal stretch at 1–25 (MVHYNFLSLIIFACFFAVFVLLVRA) is a signal peptide. The Extracellular segment spans residues 26 to 518 (QDQSGFVSID…SDEKTKKNVY (493 aa)). N-linked (GlcNAc...) asparagine glycosylation is found at Asn143, Asn234, Asn295, Asn310, Asn404, Asn419, Asn435, Asn446, and Asn462. LRR repeat units lie at residues 438 to 460 (LLHI…LGNL) and 462 to 483 (NLTE…KLLE). Residues 519 to 539 (IIPLVASVVGVLGLVLAIALF) traverse the membrane as a helical segment. The Cytoplasmic segment spans residues 540–881 (LLYKKRHRRG…FDSGMFPQAR (342 aa)). A Protein kinase domain is found at 576 to 850 (NNFERVLGQG…HVVAELKESV (275 aa)). ATP contacts are provided by residues 582–590 (LGQGGFGKV) and Lys603. Phosphotyrosine is present on Tyr648. The active-site Proton acceptor is the Asp699. A phosphothreonine mark is found at Thr734 and Thr739. Tyr747 is subject to Phosphotyrosine. Residues 851–881 (SRARAGGGSGASSVTDPAMTNFDSGMFPQAR) are disordered.

It belongs to the protein kinase superfamily. Ser/Thr protein kinase family.

Its subcellular location is the cell membrane. It catalyses the reaction L-seryl-[protein] + ATP = O-phospho-L-seryl-[protein] + ADP + H(+). The enzyme catalyses L-threonyl-[protein] + ATP = O-phospho-L-threonyl-[protein] + ADP + H(+). The protein is Putative leucine-rich repeat receptor-like protein kinase At2g19210 of Arabidopsis thaliana (Mouse-ear cress).